Here is an 83-residue protein sequence, read N- to C-terminus: MSSGGLLLLLGLLTLWEGLTPVSSKDRPNFCHLPHDPGPCKGNFQAFYYHPVRRTCLEFIYGGCQGNPNNFKTIDECKRTCAA.

An N-terminal signal peptide occupies residues 1–24 (MSSGGLLLLLGLLTLWEGLTPVSS). In terms of domain architecture, BPTI/Kunitz inhibitor spans 31-81 (CHLPHDPGPCKGNFQAFYYHPVRRTCLEFIYGGCQGNPNNFKTIDECKRTC). Cystine bridges form between Cys31/Cys81, Cys40/Cys64, and Cys56/Cys77.

Belongs to the venom Kunitz-type family. Expressed by the venom gland.

The protein localises to the secreted. Functionally, serine protease inhibitor. This Pseudechis australis (Mulga snake) protein is Kunitz-type serine protease inhibitor mulgin-5.